The sequence spans 344 residues: Uroporphyrinogen decarboxylase (344 aa).

Substrate-binding positions include 23-27 (RQAGR), Asp73, Tyr149, Thr204, and His321.

This sequence belongs to the uroporphyrinogen decarboxylase family. As to quaternary structure, homodimer.

Its subcellular location is the cytoplasm. The catalysed reaction is uroporphyrinogen III + 4 H(+) = coproporphyrinogen III + 4 CO2. Its pathway is porphyrin-containing compound metabolism; protoporphyrin-IX biosynthesis; coproporphyrinogen-III from 5-aminolevulinate: step 4/4. In terms of biological role, catalyzes the decarboxylation of four acetate groups of uroporphyrinogen-III to yield coproporphyrinogen-III. This chain is Uroporphyrinogen decarboxylase, found in Francisella philomiragia subsp. philomiragia (strain ATCC 25017 / CCUG 19701 / FSC 153 / O#319-036).